The following is a 205-amino-acid chain: Holliday junction branch migration complex subunit RuvA (205 aa).

The interval methionine 1 to alanine 64 is domain I. The tract at residues glutamate 65–threonine 143 is domain II. The flexible linker stretch occupies residues leucine 144–serine 154. Residues serine 154–lysine 205 form a domain III region.

Belongs to the RuvA family. Homotetramer. Forms an RuvA(8)-RuvB(12)-Holliday junction (HJ) complex. HJ DNA is sandwiched between 2 RuvA tetramers; dsDNA enters through RuvA and exits via RuvB. An RuvB hexamer assembles on each DNA strand where it exits the tetramer. Each RuvB hexamer is contacted by two RuvA subunits (via domain III) on 2 adjacent RuvB subunits; this complex drives branch migration. In the full resolvosome a probable DNA-RuvA(4)-RuvB(12)-RuvC(2) complex forms which resolves the HJ.

It localises to the cytoplasm. Its function is as follows. The RuvA-RuvB-RuvC complex processes Holliday junction (HJ) DNA during genetic recombination and DNA repair, while the RuvA-RuvB complex plays an important role in the rescue of blocked DNA replication forks via replication fork reversal (RFR). RuvA specifically binds to HJ cruciform DNA, conferring on it an open structure. The RuvB hexamer acts as an ATP-dependent pump, pulling dsDNA into and through the RuvAB complex. HJ branch migration allows RuvC to scan DNA until it finds its consensus sequence, where it cleaves and resolves the cruciform DNA. The chain is Holliday junction branch migration complex subunit RuvA from Pseudomonas putida (strain ATCC 47054 / DSM 6125 / CFBP 8728 / NCIMB 11950 / KT2440).